We begin with the raw amino-acid sequence, 260 residues long: MGAQDQNGKNHGGLFRDFQNRNVKKMWPLVMPITIILLVMIFMISSYSRVKKVTVSGNEIVSDQQIKAFSPVKKGTSLFAVWGKTDKLAQSLKQRSRRMQSVKMKLVNFNQVKIKVEEYPTIGYLFVHGGYQPILKSGVIIKGKVLNPKAGFPVLKKFQNPKKLRRTIKQYRRISPPVRAVMNTISFSPTKSNPDRIFIQMSDGNKVYASISTFGDKMDYYPSISSKLKVKSVINLEVGAYSYPIPQKQTSTKTTSVQGY.

Residues 1–25 are Cytoplasmic-facing; it reads MGAQDQNGKNHGGLFRDFQNRNVKK. A helical membrane pass occupies residues 26–46; sequence MWPLVMPITIILLVMIFMISS. The Extracellular segment spans residues 47–260; sequence YSRVKKVTVS…STKTTSVQGY (214 aa). In terms of domain architecture, POTRA spans 48–119; that stretch reads SRVKKVTVSG…NQVKIKVEEY (72 aa).

The protein belongs to the FtsQ/DivIB family. DivIB subfamily.

Its subcellular location is the cell membrane. Functionally, cell division protein that may be involved in stabilizing or promoting the assembly of the division complex. The polypeptide is Cell division protein DivIB (Lentilactobacillus buchneri (strain NRRL B-30929) (Lactobacillus buchneri)).